A 123-amino-acid chain; its full sequence is NADH dehydrogenase [ubiquinone] 1 beta subcomplex subunit 7 (123 aa).

The tract at residues 1–32 (MGTKLSVSLEGASTPETAPRVDRPPTFDPQYG) is disordered. In terms of domain architecture, CHCH spans 59 to 102 (RDYCAHHLISLMKCQTQNAPFAGHACDGERGAWDKCEYDDHIMR). Short sequence motifs (cx9C motif) lie at residues 62–72 (CAHHLISLMKC) and 84–94 (CDGERGAWDKC). Disulfide bonds link Cys-62-Cys-94 and Cys-72-Cys-84.

The protein belongs to the complex I NDUFB7 subunit family. As to quaternary structure, complex I is composed of 45 different subunits.

It is found in the mitochondrion. Its subcellular location is the mitochondrion inner membrane. It localises to the mitochondrion intermembrane space. Its function is as follows. Accessory subunit of the mitochondrial membrane respiratory chain NADH dehydrogenase (Complex I), that is believed not to be involved in catalysis. Complex I functions in the transfer of electrons from NADH to the respiratory chain. The immediate electron acceptor for the enzyme is believed to be ubiquinone. In Caenorhabditis elegans, this protein is NADH dehydrogenase [ubiquinone] 1 beta subcomplex subunit 7.